The chain runs to 195 residues: Probable GTP-binding protein EngB (195 aa).

The EngB-type G domain maps to 22 to 195 (GYPEIALVGR…WKWIEDRMGE (174 aa)). GTP contacts are provided by residues 30–37 (GRSNVGKS), 57–61 (GKTQT), 75–78 (DVPG), 142–145 (TKSD), and 173–176 (MFSA). Mg(2+) is bound by residues S37 and T59.

This sequence belongs to the TRAFAC class TrmE-Era-EngA-EngB-Septin-like GTPase superfamily. EngB GTPase family. Requires Mg(2+) as cofactor.

In terms of biological role, necessary for normal cell division and for the maintenance of normal septation. This Pediococcus pentosaceus (strain ATCC 25745 / CCUG 21536 / LMG 10740 / 183-1w) protein is Probable GTP-binding protein EngB.